An 88-amino-acid polypeptide reads, in one-letter code: UPF0250 protein Sfri_0694 (88 aa).

Belongs to the UPF0250 family.

In Shewanella frigidimarina (strain NCIMB 400), this protein is UPF0250 protein Sfri_0694.